Reading from the N-terminus, the 146-residue chain is Hemoglobin subunit beta-1 (146 aa).

A Globin domain is found at 2–146; sequence EWTDQERATI…VVSALGKQYH (145 aa). Positions 63 and 92 each coordinate heme b.

This sequence belongs to the globin family. Hb1 is a heterotetramer of two alpha-1 chains and two beta-1 chains. Hb2 is a heterotetramer of two alpha-2 chains and two beta-1 chains. HbC is a heterotetramer of two alpha-1 chains and two beta-2 chains. Red blood cells.

Functionally, involved in oxygen transport from gills to the various peripheral tissues. The polypeptide is Hemoglobin subunit beta-1 (Eleginops maclovinus (Patagonian blennie)).